Here is a 669-residue protein sequence, read N- to C-terminus: MMDKETAKHRAEELRRTIDQYSYEYYTLDEPSVPDSEYDRLMQELIAIEEEHPELRTPDSPTQRVGGAVLESFQKVQHGTPMLSLGNAFNDDDLRDFDRRVRQAVGDGVAYNVELKIDGLAVSLRYEDGYFVRGATRGDGTTGEDITENLKTIRNIPLKMKRNLSIEVRGEAYMPKQSFEALNEERLKHEEEPFANPRNAAAGSLRQLDPKIAAKRNLDIFVYSIAELDEMGVETQSQGLDFLDELGFKTNQERKKCATIDEVIEMIEELQAKRADLPYEIDGIVIKVDSLDQQEELGYTAKSPRWAIAYKFPAEEVVTKLLDIELNVGRTGVITPTAVLEPVKVAGTTVSRASLHNEDLIKEKDIRILDKVVVKKAGDIIPEVVNVLIEQRTGEEKEFNMPTGCPECESELVRIEGEVALRCINPECPAQIREGLIHFVSRNAMNIDGLGERVITQLFREHLVRNVADLYKLTKEQVIRLERMGEKSTDNLISSIQKSKENSLERLLFGLGIRFIGSKAAKTLAMHFESLENLKQVTEEELLAVDEIGEKMADAVITYFRKEEMLELLNELEELGVNTLYKGPKKVKAEDSDSYFAGKTIVLTGKLEELSRNEAKAQIEALGGKLTGSVSKKTDLLIAGEAAGSKLTKAQELNIEVWNEAQLLGELKK.

NAD(+) is bound by residues Asp35–Asp39, Ser84–Leu85, and Glu114. Lys116 acts as the N6-AMP-lysine intermediate in catalysis. Residues Arg137, Glu171, Lys287, and Lys311 each contribute to the NAD(+) site. 4 residues coordinate Zn(2+): Cys405, Cys408, Cys423, and Cys428. The BRCT domain occupies Asp591–Lys669.

The protein belongs to the NAD-dependent DNA ligase family. LigA subfamily. Mg(2+) serves as cofactor. Requires Mn(2+) as cofactor.

It carries out the reaction NAD(+) + (deoxyribonucleotide)n-3'-hydroxyl + 5'-phospho-(deoxyribonucleotide)m = (deoxyribonucleotide)n+m + AMP + beta-nicotinamide D-nucleotide.. Functionally, DNA ligase that catalyzes the formation of phosphodiester linkages between 5'-phosphoryl and 3'-hydroxyl groups in double-stranded DNA using NAD as a coenzyme and as the energy source for the reaction. It is essential for DNA replication and repair of damaged DNA. This Bacillus velezensis (strain DSM 23117 / BGSC 10A6 / LMG 26770 / FZB42) (Bacillus amyloliquefaciens subsp. plantarum) protein is DNA ligase.